Reading from the N-terminus, the 337-residue chain is Beta-glucosidase-like protein NCA3, mitochondrial (337 aa).

Residues 57 to 67 (ESAATTTTLSS) show a composition bias toward low complexity. The segment at 57 to 84 (ESAATTTTLSSSEKDTSEQKRDGGFQDG) is disordered. Basic and acidic residues predominate over residues 68–80 (SEKDTSEQKRDGG).

It belongs to the SUN family.

Its subcellular location is the mitochondrion. Functionally, involved in the mitochondrial expression of subunits 6 and 8 of the F0-F1 ATP synthase. This Saccharomyces cerevisiae (strain ATCC 204508 / S288c) (Baker's yeast) protein is Beta-glucosidase-like protein NCA3, mitochondrial (NCA3).